The chain runs to 121 residues: MAELHVEIVAVERELWSGDATFVFTRTTAGEIGILPRHIPLVAQLVDDAMVRVEREGEDDLRIAVDGGFLSVTEEAVRILVENAELESEIDADAAKQDSESDDERTAAWGRARLRALGQLD.

This sequence belongs to the ATPase epsilon chain family. As to quaternary structure, F-type ATPases have 2 components, CF(1) - the catalytic core - and CF(0) - the membrane proton channel. CF(1) has five subunits: alpha(3), beta(3), gamma(1), delta(1), epsilon(1). CF(0) has three main subunits: a, b and c.

The protein resides in the cell membrane. Functionally, produces ATP from ADP in the presence of a proton gradient across the membrane. This Mycolicibacterium vanbaalenii (strain DSM 7251 / JCM 13017 / BCRC 16820 / KCTC 9966 / NRRL B-24157 / PYR-1) (Mycobacterium vanbaalenii) protein is ATP synthase epsilon chain.